The following is a 283-amino-acid chain: Elongation factor Ts (283 aa).

The interval 80–83 is involved in Mg(2+) ion dislocation from EF-Tu; sequence TDFV.

It belongs to the EF-Ts family.

The protein resides in the cytoplasm. Its function is as follows. Associates with the EF-Tu.GDP complex and induces the exchange of GDP to GTP. It remains bound to the aminoacyl-tRNA.EF-Tu.GTP complex up to the GTP hydrolysis stage on the ribosome. This is Elongation factor Ts from Cronobacter sakazakii (strain ATCC BAA-894) (Enterobacter sakazakii).